The sequence spans 157 residues: Crossover junction endodeoxyribonuclease RuvC (157 aa).

Catalysis depends on residues Asp7, Glu67, and Asp139. Residues Asp7, Glu67, and Asp139 each coordinate Mg(2+).

It belongs to the RuvC family. Homodimer which binds Holliday junction (HJ) DNA. The HJ becomes 2-fold symmetrical on binding to RuvC with unstacked arms; it has a different conformation from HJ DNA in complex with RuvA. In the full resolvosome a probable DNA-RuvA(4)-RuvB(12)-RuvC(2) complex forms which resolves the HJ. The cofactor is Mg(2+).

The protein resides in the cytoplasm. The enzyme catalyses Endonucleolytic cleavage at a junction such as a reciprocal single-stranded crossover between two homologous DNA duplexes (Holliday junction).. The RuvA-RuvB-RuvC complex processes Holliday junction (HJ) DNA during genetic recombination and DNA repair. Endonuclease that resolves HJ intermediates. Cleaves cruciform DNA by making single-stranded nicks across the HJ at symmetrical positions within the homologous arms, yielding a 5'-phosphate and a 3'-hydroxyl group; requires a central core of homology in the junction. The consensus cleavage sequence is 5'-(A/T)TT(C/G)-3'. Cleavage occurs on the 3'-side of the TT dinucleotide at the point of strand exchange. HJ branch migration catalyzed by RuvA-RuvB allows RuvC to scan DNA until it finds its consensus sequence, where it cleaves and resolves the cruciform DNA. This chain is Crossover junction endodeoxyribonuclease RuvC, found in Prochlorococcus marinus (strain MIT 9301).